A 311-amino-acid polypeptide reads, in one-letter code: Dehydrogenase/reductase SDR family member 7C (311 aa).

Positions 1 to 18 (MGIMAVLMLPLLLLGVSG) are cleaved as a signal peptide. NAD(+) is bound by residues serine 47, leucine 49, tyrosine 191, lysine 195, and serine 226. Tyrosine 191 acts as the Proton acceptor in catalysis.

This sequence belongs to the short-chain dehydrogenases/reductases (SDR) family. Expressed in skeletal muscle, cardiac muscle and skin.

The protein resides in the sarcoplasmic reticulum membrane. It catalyses the reaction all-trans-retinol + NAD(+) = all-trans-retinal + NADH + H(+). Its function is as follows. NADH-dependent oxidoreductase which catalyzes the oxidation of all-trans-retinol to all-trans-retinal. Plays a role in the regulation of cardiac and skeletal muscle metabolic functions. Maintains Ca(2+) intracellular homeostasis by repressing Ca(2+) release from the sarcoplasmic reticulum (SR) in myotubes, possibly through local alternations in NAD/NADH or retinol/retinal. Also plays a role in Ca(2+) homeostasis by controlling Ca(2+) overload in the cytosol and the SR in myotubes. Involved in glucose uptake into skeletal muscles and muscle performance by activating PI3K and mTORC2-mediated AKT1 phosphorylation signaling pathways, possibly through the action of its downstream catalytic product all-trans-retinoic acid. This is Dehydrogenase/reductase SDR family member 7C from Rattus norvegicus (Rat).